The following is a 412-amino-acid chain: STAGA complex 65 subunit gamma (412 aa).

A disordered region spans residues 81 to 107 (AQTQSQQQTEGVKAEESEPLPSCPGSP). Ser-106 bears the Phosphoserine mark. Lys-269 participates in a covalent cross-link: Glycyl lysine isopeptide (Lys-Gly) (interchain with G-Cter in SUMO2). Phosphoserine occurs at positions 321 and 332. The tract at residues 364-412 (EEPMSGMSEAGLPQSPDDSDSSYGSHSTDSLMGSSPVFNQRCRKRMRKI) is disordered. Low complexity predominate over residues 384 to 393 (SSYGSHSTDS).

Component of the STAGA transcription coactivator-HAT complex, at least composed of SUPT3H, SUPT7L, GCN5L2, TAF5L, TAF6L, TADA3L, TAD1L, TAF10, TAF12 and TAF9. In terms of processing, sumoylated.

The protein localises to the nucleus. This is STAGA complex 65 subunit gamma (Supt7l) from Mus musculus (Mouse).